The primary structure comprises 538 residues: Non-specific phospholipase C4 (538 aa).

Residues 91–112 (KPWDSGKPDPNPGHPNMSGFAQ) form a disordered region.

Belongs to the bacterial phospholipase C family. Expressed in root tips, cotyledons, on leaf margins, stems, young anthers and funiculus.

Its subcellular location is the cell membrane. The catalysed reaction is a 1,2-diacyl-sn-glycero-3-phosphocholine + H2O = phosphocholine + a 1,2-diacyl-sn-glycerol + H(+). Non-specific phospholipase C (PLC) which assumes major PLC activity during inorganic phosphate starvation. Substrate preference is phosphatidylcholine (PC), but can also hydrolyze phosphatidylethanolamine (PE) with lower efficiency. Has no activity toward phosphatidic acid (PA). Plays an important role in the supply of both inorganic phosphate and diacylglycerol from membrane-localized phospholipids during phosphate deprivation. May be required for lipid-derived signaling molecules that positively modulate abscisic acid (ABA) response and promote plant tolerance to drought and salt stresses. May be involved in brassinolide-mediated signaling in root development. The chain is Non-specific phospholipase C4 (NPC4) from Arabidopsis thaliana (Mouse-ear cress).